We begin with the raw amino-acid sequence, 257 residues long: Tryptophan synthase alpha chain (257 aa).

Residues Glu-47 and Asp-58 each act as proton acceptor in the active site.

This sequence belongs to the TrpA family. In terms of assembly, tetramer of two alpha and two beta chains.

The catalysed reaction is (1S,2R)-1-C-(indol-3-yl)glycerol 3-phosphate + L-serine = D-glyceraldehyde 3-phosphate + L-tryptophan + H2O. Its pathway is amino-acid biosynthesis; L-tryptophan biosynthesis; L-tryptophan from chorismate: step 5/5. In terms of biological role, the alpha subunit is responsible for the aldol cleavage of indoleglycerol phosphate to indole and glyceraldehyde 3-phosphate. The chain is Tryptophan synthase alpha chain from Listeria innocua serovar 6a (strain ATCC BAA-680 / CLIP 11262).